The following is a 476-amino-acid chain: DnaJ homolog subfamily C member 7 homolog (476 aa).

The tract at residues 1-22 (MTEVETTHMNAGTESQQEPAEL) is disordered. Residues 7 to 18 (THMNAGTESQQE) are compositionally biased toward polar residues. TPR repeat units follow at residues 23–56 (AEKQ…GSDS), 59–92 (AIYY…KPDV), 143–176 (MSWM…NPKN), 177–210 (VEAL…DPDC), 223–256 (LENT…DPDN), 261–294 (AKLY…DSSY), and 295–328 (LKGL…DASD). Positions 349 to 414 (DHYKILGVSK…ESRRRFDSGV (66 aa)) constitute a J domain.

It localises to the cytoplasm. This Schizosaccharomyces pombe (strain 972 / ATCC 24843) (Fission yeast) protein is DnaJ homolog subfamily C member 7 homolog.